A 389-amino-acid chain; its full sequence is Succinate--CoA ligase [ADP-forming] subunit beta (389 aa).

Residues 9–244 (KKLFADYGLP…LTQEDPREAE (236 aa)) form the ATP-grasp domain. ATP contacts are provided by residues Lys-46, 53–55 (GRG), Glu-99, Ala-102, and Glu-107. 2 residues coordinate Mg(2+): Asn-199 and Asp-213. Residues Asn-264 and 321-323 (GIV) contribute to the substrate site.

The protein belongs to the succinate/malate CoA ligase beta subunit family. In terms of assembly, heterotetramer of two alpha and two beta subunits. Mg(2+) serves as cofactor.

It catalyses the reaction succinate + ATP + CoA = succinyl-CoA + ADP + phosphate. The catalysed reaction is GTP + succinate + CoA = succinyl-CoA + GDP + phosphate. The protein operates within carbohydrate metabolism; tricarboxylic acid cycle; succinate from succinyl-CoA (ligase route): step 1/1. Succinyl-CoA synthetase functions in the citric acid cycle (TCA), coupling the hydrolysis of succinyl-CoA to the synthesis of either ATP or GTP and thus represents the only step of substrate-level phosphorylation in the TCA. The beta subunit provides nucleotide specificity of the enzyme and binds the substrate succinate, while the binding sites for coenzyme A and phosphate are found in the alpha subunit. This is Succinate--CoA ligase [ADP-forming] subunit beta from Histophilus somni (strain 2336) (Haemophilus somnus).